The following is a 300-amino-acid chain: ETS homologous factor (300 aa).

The PNT domain maps to 29-115 (STCNVSSGFF…SNLQHLKWNG (87 aa)). Residues 183–202 (ESPDMKKEQDPPAKCHTKKH) are disordered. The span at 185-195 (PDMKKEQDPPA) shows a compositional bias: basic and acidic residues. Positions 207-289 (THLWEFIRDI…DGRRLVYKFG (83 aa)) form a DNA-binding region, ETS.

The protein belongs to the ETS family.

It localises to the nucleus. Its function is as follows. Transcriptional activator that may play a role in regulating epithelial cell differentiation and proliferation. May act as a repressor for a specific subset of ETS/AP-1-responsive genes, and as a modulator of the nuclear response to mitogen-activated protein kinase signaling cascades. Binds to DNA sequences containing the consensus nucleotide core sequence GGAA. Involved in regulation of TNFRSF10B/DR5 expression through Ets-binding sequences on the TNFRSF10B/DR5 promoter. The polypeptide is ETS homologous factor (EHF) (Pan paniscus (Pygmy chimpanzee)).